A 74-amino-acid polypeptide reads, in one-letter code: Exodeoxyribonuclease 7 small subunit (74 aa).

Belongs to the XseB family. In terms of assembly, heterooligomer composed of large and small subunits.

The protein resides in the cytoplasm. The catalysed reaction is Exonucleolytic cleavage in either 5'- to 3'- or 3'- to 5'-direction to yield nucleoside 5'-phosphates.. Bidirectionally degrades single-stranded DNA into large acid-insoluble oligonucleotides, which are then degraded further into small acid-soluble oligonucleotides. This Neisseria meningitidis serogroup A / serotype 4A (strain DSM 15465 / Z2491) protein is Exodeoxyribonuclease 7 small subunit.